The chain runs to 416 residues: UDP-N-acetylglucosamine 1-carboxyvinyltransferase (416 aa).

Residue 22 to 23 (KN) participates in phosphoenolpyruvate binding. Arg91 serves as a coordination point for UDP-N-acetyl-alpha-D-glucosamine. The Proton donor role is filled by Cys115. Cys115 is modified (2-(S-cysteinyl)pyruvic acid O-phosphothioketal). Residues 120 to 124 (RPIDL), Asp305, and Ile327 contribute to the UDP-N-acetyl-alpha-D-glucosamine site.

The protein belongs to the EPSP synthase family. MurA subfamily.

It is found in the cytoplasm. It carries out the reaction phosphoenolpyruvate + UDP-N-acetyl-alpha-D-glucosamine = UDP-N-acetyl-3-O-(1-carboxyvinyl)-alpha-D-glucosamine + phosphate. It participates in cell wall biogenesis; peptidoglycan biosynthesis. In terms of biological role, cell wall formation. Adds enolpyruvyl to UDP-N-acetylglucosamine. The chain is UDP-N-acetylglucosamine 1-carboxyvinyltransferase from Buchnera aphidicola subsp. Acyrthosiphon pisum (strain Tuc7).